Here is a 147-residue protein sequence, read N- to C-terminus: MGATGLGFLLSWRQDNLNGTDCQGCNILYFSETTGSMCSELSLNRGLEARRKKDLKDSFLWRYGKVGCISLPLREMTAWINPPQISEIFQGYHQRVHGADALSLQTNSLRSRLSSQCLGQSFLLRTLERGRGFRALGDICGHVHEED.

In terms of tissue distribution, expressed in testis. Detected in spermatocytes, spermatids and spermatozoa (at protein level).

The chain is PTPN13-like protein, Y-linked (PRY) from Homo sapiens (Human).